A 45-amino-acid polypeptide reads, in one-letter code: U1-ctenitoxin-Pk1a (45 aa).

Disulfide bonds link cysteine 3–cysteine 16, cysteine 10–cysteine 25, cysteine 15–cysteine 34, and cysteine 27–cysteine 32.

Expressed by the venom gland.

Its subcellular location is the secreted. Functionally, neurotoxin. Causes rapid general flaccid paralysis and death in mice at dose levels of 5 ug per mouse. The sequence is that of U1-ctenitoxin-Pk1a from Phoneutria keyserlingi (Brazilian wandering spider).